We begin with the raw amino-acid sequence, 201 residues long: Glutathione peroxidase 1 (201 aa).

Residue Ser32 is modified to Phosphoserine. Sec47 is an active-site residue. Sec47 is a non-standard amino acid (selenocysteine). N6-acetyllysine; alternate occurs at positions 86, 112, and 146. N6-succinyllysine; alternate is present on residues Lys86, Lys112, and Lys146. A phosphoserine mark is found at Ser195 and Ser199.

It belongs to the glutathione peroxidase family. As to quaternary structure, homotetramer. Interacts with MIEN1. During periods of oxidative stress, Sec-47 may react with a superoxide radical, irreversibly lose hydroselenide and be converted to dehydroalanine.

The protein localises to the cytoplasm. It localises to the mitochondrion. It catalyses the reaction 2 glutathione + H2O2 = glutathione disulfide + 2 H2O. The catalysed reaction is a hydroperoxy polyunsaturated fatty acid + 2 glutathione = a hydroxy polyunsaturated fatty acid + glutathione disulfide + H2O. It carries out the reaction tert-butyl hydroperoxide + 2 glutathione = tert-butanol + glutathione disulfide + H2O. The enzyme catalyses cumene hydroperoxide + 2 glutathione = 2-phenylpropan-2-ol + glutathione disulfide + H2O. It catalyses the reaction (13S)-hydroperoxy-(9Z,11E)-octadecadienoate + 2 glutathione = (13S)-hydroxy-(9Z,11E)-octadecadienoate + glutathione disulfide + H2O. The catalysed reaction is (9S)-hydroperoxy-(10E,12Z)-octadecadienoate + 2 glutathione = (9S)-hydroxy-(10E,12Z)-octadecadienoate + glutathione disulfide + H2O. It carries out the reaction (5S)-hydroperoxy-(6E,8Z,11Z,14Z)-eicosatetraenoate + 2 glutathione = (5S)-hydroxy-(6E,8Z,11Z,14Z)-eicosatetraenoate + glutathione disulfide + H2O. The enzyme catalyses (12S)-hydroperoxy-(5Z,8Z,10E,14Z)-eicosatetraenoate + 2 glutathione = (12S)-hydroxy-(5Z,8Z,10E,14Z)-eicosatetraenoate + glutathione disulfide + H2O. It catalyses the reaction (12R)-hydroperoxy-(5Z,8Z,10E,14Z)-eicosatetraenoate + 2 glutathione = (12R)-hydroxy-(5Z,8Z,10E,14Z)-eicosatetraenoate + glutathione disulfide + H2O. The catalysed reaction is (15S)-hydroperoxy-(5Z,8Z,11Z,13E)-eicosatetraenoate + 2 glutathione = (15S)-hydroxy-(5Z,8Z,11Z,13E)-eicosatetraenoate + glutathione disulfide + H2O. It carries out the reaction (5S)-hydroperoxy-(6E,8Z,11Z,14Z,17Z)-eicosapentaenoate + 2 glutathione = (5S)-hydroxy-(6E,8Z,11Z,14Z,17Z)-eicosapentaenoate + glutathione disulfide + H2O. The enzyme catalyses (12S)-hydroperoxy-(5Z,8Z,10E,14Z,17Z)-eicosapentaenoate + 2 glutathione = (12S)-hydroxy-(5Z,8Z,10E,14Z,17Z)-eicosapentaenoate + glutathione disulfide + H2O. It catalyses the reaction (15S)-hydroperoxy-(5Z,8Z,11Z,13E,17Z)-eicosapentaenoate + 2 glutathione = (15S)-hydroxy-(5Z,8Z,11Z,13E,17Z)-eicosapentaenoate + glutathione disulfide + H2O. The catalysed reaction is (15S)-hydroperoxy-(11Z,13E)-eicosadienoate + 2 glutathione = (15S)-hydroxy-(11Z,13E)-eicosadienoate + glutathione disulfide + H2O. It carries out the reaction (17S)-hydroperoxy-(4Z,7Z,10Z,13Z,15E,19Z)-docosahexaenoate + 2 glutathione = (17S)-hydroxy-(4Z,7Z,10Z,13Z,15E,19Z)-docosahexaenoate + glutathione disulfide + H2O. Its function is as follows. Catalyzes the reduction of hydroperoxides in a glutathione-dependent manner thus regulating cellular redox homeostasis. Can reduce small soluble hydroperoxides such as H2O2, cumene hydroperoxide and tert-butyl hydroperoxide, as well as several fatty acid-derived hydroperoxides. In platelets catalyzes the reduction of 12-hydroperoxyeicosatetraenoic acid, the primary product of the arachidonate 12-lipoxygenase pathway. This is Glutathione peroxidase 1 (GPX1) from Callithrix jacchus (White-tufted-ear marmoset).